The following is a 90-amino-acid chain: Long neurotoxin 1 (90 aa).

A signal peptide spans 1-21; the sequence is MKTLLLTLVVVTIVCLDVGNS. Intrachain disulfides connect Cys-24/Cys-42, Cys-35/Cys-63, Cys-48/Cys-52, Cys-67/Cys-78, and Cys-79/Cys-84.

The protein belongs to the three-finger toxin family. Long-chain subfamily. Type II alpha-neurotoxin sub-subfamily. As to expression, expressed by the venom gland.

It is found in the secreted. Functionally, binds with high affinity to muscular (alpha-1/CHRNA1) and neuronal (alpha-7/CHRNA7) nicotinic acetylcholine receptor (nAChR) and inhibits acetylcholine from binding to the receptor, thereby impairing neuromuscular and neuronal transmission. This Austrelaps superbus (Lowland copperhead snake) protein is Long neurotoxin 1.